Here is a 358-residue protein sequence, read N- to C-terminus: MTQKVVVGLSGGVDSSVAAALLHRQGYAVVGVTLWLMKGKGQCCSEGLVDAASICEQLGVPHEIVDTRDLFQNHIIDYLVQGYGEGVTPLPCSQCNKAVKFGPMLQYAQQSLGIDKIATGHYARIRFNEASQRYELLRAVDRQKDQSYFLYDLSQEILAATLFPLGEQTKTVTRQLAAEFDLSTAEKKDSQDLCLIEAHGSMRDFLDKYIAPKAGEIVDLSGAVLGHHEGIHHYTIGQRKGLGIAAAEPLYVVKLDPVMNRVIVGDRQSAGSGECYVQRLNWVSIPEPTAPIRCEVQVRYRSAPVTVNAIPWHDQQIKLVFDEPQFGITPGQAAVLYDGDRVLGGGIICPQKSETAGV.

ATP contacts are provided by residues 8–15 (GLSGGVDS) and Leu34. The active-site Nucleophile is Cys95. A disulfide bridge links Cys95 with Cys194. An ATP-binding site is contributed by Gly120. Positions 144 to 146 (KDQ) are interaction with tRNA. Residue Cys194 is the Cysteine persulfide intermediate of the active site. The tract at residues 299–300 (RY) is interaction with tRNA.

The protein belongs to the MnmA/TRMU family.

The protein localises to the cytoplasm. The catalysed reaction is S-sulfanyl-L-cysteinyl-[protein] + uridine(34) in tRNA + AH2 + ATP = 2-thiouridine(34) in tRNA + L-cysteinyl-[protein] + A + AMP + diphosphate + H(+). In terms of biological role, catalyzes the 2-thiolation of uridine at the wobble position (U34) of tRNA, leading to the formation of s(2)U34. The sequence is that of tRNA-specific 2-thiouridylase MnmA from Synechocystis sp. (strain ATCC 27184 / PCC 6803 / Kazusa).